Consider the following 329-residue polypeptide: Glyceraldehyde-3-phosphate dehydrogenase 1 (329 aa).

Residues 11–12, Asp-33, and Glu-77 contribute to the NAD(+) site; that span reads RI. Ser-148 is modified (phosphoserine). D-glyceraldehyde 3-phosphate is bound at residue 148 to 150; sequence SCT. The Nucleophile role is filled by Cys-149. The residue at position 177 (Ser-177) is a Phosphoserine. Thr-179 contributes to the D-glyceraldehyde 3-phosphate binding site. Ser-200 is modified (phosphoserine). D-glyceraldehyde 3-phosphate-binding positions include 208–209 and Arg-231; that span reads TG. Asn-313 provides a ligand contact to NAD(+).

It belongs to the glyceraldehyde-3-phosphate dehydrogenase family. As to quaternary structure, homotetramer.

It localises to the cytoplasm. It carries out the reaction D-glyceraldehyde 3-phosphate + phosphate + NAD(+) = (2R)-3-phospho-glyceroyl phosphate + NADH + H(+). It participates in carbohydrate degradation; glycolysis; pyruvate from D-glyceraldehyde 3-phosphate: step 1/5. The chain is Glyceraldehyde-3-phosphate dehydrogenase 1 from Kluyveromyces marxianus (Yeast).